We begin with the raw amino-acid sequence, 414 residues long: MVKVEVLGMILAGGQGSRLYPLTAKRAKPAVPFGAKYRIIDFVLNNFVNSGIYAIYVLTQYKAQSLTEHIQRYWRFGAFLEDHFILLVPAQMYRYEELGPVWYRGTADAIYQNLHLVHNHAPKAVAVFGGDHIFKMNIRHMVEYHYDTRADITIAAYPVPVAEATRFGVLQVDEEWRITEFQEKPEEPKPIPGRPDMALASMGNYIFRTEALFELLEADARDETSAHDFGKDVIPRALREGYRVYAYDFHRNPIPGQEGPNLYWRDVGTLDAYYEASMDLVKVVPEFDLFNPEWPLRTANLFSPPAKFVHETGERVGRALNSLLAGGVIVSGGTVRESVLFRRVRVNSYSLVERSVLFDDVEVGRYCRIRNAIIDKNVKIPPHTEIGYDLELDRARGFTVTPEGVVVVPKGYRF.

Alpha-D-glucose 1-phosphate-binding positions include tyrosine 103, glycine 168, 183-184 (EK), and serine 201.

This sequence belongs to the bacterial/plant glucose-1-phosphate adenylyltransferase family. As to quaternary structure, homotetramer.

The enzyme catalyses alpha-D-glucose 1-phosphate + ATP + H(+) = ADP-alpha-D-glucose + diphosphate. It participates in glycan biosynthesis; glycogen biosynthesis. Involved in the biosynthesis of ADP-glucose, a building block required for the elongation reactions to produce glycogen. Catalyzes the reaction between ATP and alpha-D-glucose 1-phosphate (G1P) to produce pyrophosphate and ADP-Glc. This chain is Glucose-1-phosphate adenylyltransferase, found in Thermus thermophilus (strain ATCC 27634 / DSM 579 / HB8).